The following is a 156-amino-acid chain: Dihydrofolate reductase (156 aa).

In terms of domain architecture, DHFR spans 1-156 (MLKLIWCQTL…VNYYSNKKEK (156 aa)).

This sequence belongs to the dihydrofolate reductase family.

It carries out the reaction (6S)-5,6,7,8-tetrahydrofolate + NADP(+) = 7,8-dihydrofolate + NADPH + H(+). The protein operates within cofactor biosynthesis; tetrahydrofolate biosynthesis; 5,6,7,8-tetrahydrofolate from 7,8-dihydrofolate: step 1/1. In terms of biological role, key enzyme in folate metabolism. Catalyzes an essential reaction for de novo glycine and purine synthesis, and for DNA precursor synthesis. The chain is Dihydrofolate reductase (folA) from Ureaplasma parvum serovar 3 (strain ATCC 700970).